Here is a 76-residue protein sequence, read N- to C-terminus: Small nuclear ribonucleoprotein G (76 aa).

A Sm domain is found at 4–76 (AHPPELKKFM…IIMLEALERV (73 aa)).

The protein belongs to the snRNP Sm proteins family. Core component of the spliceosomal U1, U2, U4 and U5 small nuclear ribonucleoproteins (snRNPs), the building blocks of the spliceosome. Most spliceosomal snRNPs contain a common set of Sm proteins, SNRPB, SNRPD1, SNRPD2, SNRPD3, SNRPE, SNRPF and SNRPG that assemble in a heptameric protein ring on the Sm site of the small nuclear RNA to form the core snRNP. Component of the U1 snRNP. The U1 snRNP is composed of the U1 snRNA and the 7 core Sm proteins SNRPB, SNRPD1, SNRPD2, SNRPD3, SNRPE, SNRPF and SNRPG, and at least three U1 snRNP-specific proteins SNRNP70/U1-70K, SNRPA/U1-A and SNRPC/U1-C. Component of the U4/U6-U5 tri-snRNP complex composed of the U4, U6 and U5 snRNAs and at least PRPF3, PRPF4, PRPF6, PRPF8, PRPF31, SNRNP200, TXNL4A, SNRNP40, SNRPB, SNRPD1, SNRPD2, SNRPD3, SNRPE, SNRPF, SNRPG, DDX23, CD2BP2, PPIH, SNU13, EFTUD2, SART1 and USP39, plus LSM2, LSM3, LSM4, LSM5, LSM6, LSM7 and LSM8. Component of the U7 snRNP complex, or U7 Sm protein core complex, that is composed of the U7 snRNA and at least LSM10, LSM11, SNRPB, SNRPD3, SNRPE, SNRPF and SNRPG; the complex does not contain SNRPD1 and SNRPD2. Component of the minor spliceosome, which splices U12-type introns. Part of the SMN-Sm complex that contains SMN1, GEMIN2/SIP1, DDX20/GEMIN3, GEMIN4, GEMIN5, GEMIN6, GEMIN7, GEMIN8, STRAP/UNRIP and the Sm proteins SNRPB, SNRPD1, SNRPD2, SNRPD3, SNRPE, SNRPF and SNRPG; catalyzes core snRNPs assembly. Forms a 6S pICln-Sm complex composed of CLNS1A/pICln, SNRPD1, SNRPD2, SNRPE, SNRPF and SNRPG; ring-like structure where CLNS1A/pICln mimics additional Sm proteins and which is unable to assemble into the core snRNP. Interacts with GEMIN2 (via N-terminus); the interaction is direct. Interacts with SNRPE; the interaction is direct.

It localises to the cytoplasm. The protein localises to the cytosol. Its subcellular location is the nucleus. Functionally, plays a role in pre-mRNA splicing as a core component of the spliceosomal U1, U2, U4 and U5 small nuclear ribonucleoproteins (snRNPs), the building blocks of the spliceosome. Component of both the pre-catalytic spliceosome B complex and activated spliceosome C complexes. As a component of the minor spliceosome, involved in the splicing of U12-type introns in pre-mRNAs. As part of the U7 snRNP it is involved in histone 3'-end processing. This is Small nuclear ribonucleoprotein G (SNRPG) from Bos taurus (Bovine).